The chain runs to 557 residues: TBCC domain-containing protein 1 (557 aa).

The region spanning 290–435 (TTKRAKIACN…LEDHMARTGL (146 aa)) is the C-CAP/cofactor C-like domain.

It belongs to the TBCC family.

Its subcellular location is the cytoplasm. It localises to the cytoskeleton. The protein resides in the microtubule organizing center. The protein localises to the centrosome. It is found in the spindle pole. Plays a role in the regulation of centrosome and Golgi apparatus positioning, with consequences on cell shape and cell migration. This is TBCC domain-containing protein 1 (TBCCD1) from Homo sapiens (Human).